The following is a 310-amino-acid chain: MTDPRHPPVIFLMGPTASGKTALAIELVKRLPCDIISVDSALIYRGMDIGTAKPTAEELAQAPHRLLDIRDPFQTYSAADFRQDALREIETIVAQGRIPLLVGGTMLYYKALLEGLSPLPAADPLIRQAIEAEASLSGWEALHAQLQSIDPVAAARIHPNDPQRLSRALEVYRISGQTLTELTQTKGEQLPYRTLQFAIAPTDRELLRQRIAERFHLMLSQGFEQEVRALYDRGDLNADLPSIRCVGYRQMWEYLDGQISYDEMVYRGIVATCQLAKRQMTWLRSWQNVTWLETGAINNADIICHSLTSA.

Residue 14–21 (GPTASGKT) coordinates ATP. 16 to 21 (TASGKT) is a substrate binding site. Interaction with substrate tRNA regions lie at residues 39-42 (DSAL), 163-167 (QRLSR), and 244-249 (RCVGYR).

This sequence belongs to the IPP transferase family. In terms of assembly, monomer. The cofactor is Mg(2+).

It catalyses the reaction adenosine(37) in tRNA + dimethylallyl diphosphate = N(6)-dimethylallyladenosine(37) in tRNA + diphosphate. In terms of biological role, catalyzes the transfer of a dimethylallyl group onto the adenine at position 37 in tRNAs that read codons beginning with uridine, leading to the formation of N6-(dimethylallyl)adenosine (i(6)A). The sequence is that of tRNA dimethylallyltransferase from Tolumonas auensis (strain DSM 9187 / NBRC 110442 / TA 4).